The following is a 545-amino-acid chain: Esterase-5C (545 aa).

Positions 1-19 (MLAARLIILLSFYWLSASA) are cleaved as a signal peptide. Cys84 and Cys103 form a disulfide bridge. Asn113 is a glycosylation site (N-linked (GlcNAc...) asparagine). The active-site Acyl-ester intermediate is Ser207. Residues Cys259 and Cys271 are joined by a disulfide bond. Asn421 carries N-linked (GlcNAc...) asparagine glycosylation. Catalysis depends on His467, which acts as the Charge relay system. The N-linked (GlcNAc...) asparagine glycan is linked to Asn507. Cys515 and Cys536 form a disulfide bridge.

This sequence belongs to the type-B carboxylesterase/lipase family.

The protein localises to the secreted. It carries out the reaction a carboxylic ester + H2O = an alcohol + a carboxylate + H(+). This chain is Esterase-5C (Est-5C), found in Drosophila miranda (Fruit fly).